Consider the following 141-residue polypeptide: Nucleoside diphosphate kinase (141 aa).

Positions 9, 57, 85, 91, 102, and 112 each coordinate ATP. His115 functions as the Pros-phosphohistidine intermediate in the catalytic mechanism.

The protein belongs to the NDK family. As to quaternary structure, homotetramer. Requires Mg(2+) as cofactor.

It localises to the cytoplasm. It carries out the reaction a 2'-deoxyribonucleoside 5'-diphosphate + ATP = a 2'-deoxyribonucleoside 5'-triphosphate + ADP. The catalysed reaction is a ribonucleoside 5'-diphosphate + ATP = a ribonucleoside 5'-triphosphate + ADP. Major role in the synthesis of nucleoside triphosphates other than ATP. The ATP gamma phosphate is transferred to the NDP beta phosphate via a ping-pong mechanism, using a phosphorylated active-site intermediate. The sequence is that of Nucleoside diphosphate kinase from Chlamydia trachomatis serovar D (strain ATCC VR-885 / DSM 19411 / UW-3/Cx).